A 44-amino-acid polypeptide reads, in one-letter code: Protein PsbN (44 aa).

A helical transmembrane segment spans residues 6–26 (FFFTFFLWFLLLSVTGYSVYV).

The protein belongs to the PsbN family.

The protein localises to the plastid. It localises to the chloroplast thylakoid membrane. Functionally, may play a role in photosystem I and II biogenesis. The chain is Protein PsbN from Chlamydomonas reinhardtii (Chlamydomonas smithii).